The chain runs to 347 residues: Holliday junction branch migration complex subunit RuvB (347 aa).

The interval 4-186 (INEYGSERIV…FGMIFEMNFY (183 aa)) is large ATPase domain (RuvB-L). ATP contacts are provided by residues leucine 25, arginine 26, glycine 67, lysine 70, threonine 71, threonine 72, 133–135 (EDF), arginine 176, tyrosine 186, and arginine 223. Threonine 71 provides a ligand contact to Mg(2+). The segment at 187 to 257 (TQEELKMIIT…IVEEVMRLLG (71 aa)) is small ATPAse domain (RuvB-S). Residues 260-347 (EFGLDEMDRK…GLFDGFGNIE (88 aa)) are head domain (RuvB-H). DNA contacts are provided by arginine 315 and arginine 320.

This sequence belongs to the RuvB family. In terms of assembly, homohexamer. Forms an RuvA(8)-RuvB(12)-Holliday junction (HJ) complex. HJ DNA is sandwiched between 2 RuvA tetramers; dsDNA enters through RuvA and exits via RuvB. An RuvB hexamer assembles on each DNA strand where it exits the tetramer. Each RuvB hexamer is contacted by two RuvA subunits (via domain III) on 2 adjacent RuvB subunits; this complex drives branch migration. In the full resolvosome a probable DNA-RuvA(4)-RuvB(12)-RuvC(2) complex forms which resolves the HJ.

The protein resides in the cytoplasm. It catalyses the reaction ATP + H2O = ADP + phosphate + H(+). In terms of biological role, the RuvA-RuvB-RuvC complex processes Holliday junction (HJ) DNA during genetic recombination and DNA repair, while the RuvA-RuvB complex plays an important role in the rescue of blocked DNA replication forks via replication fork reversal (RFR). RuvA specifically binds to HJ cruciform DNA, conferring on it an open structure. The RuvB hexamer acts as an ATP-dependent pump, pulling dsDNA into and through the RuvAB complex. RuvB forms 2 homohexamers on either side of HJ DNA bound by 1 or 2 RuvA tetramers; 4 subunits per hexamer contact DNA at a time. Coordinated motions by a converter formed by DNA-disengaged RuvB subunits stimulates ATP hydrolysis and nucleotide exchange. Immobilization of the converter enables RuvB to convert the ATP-contained energy into a lever motion, pulling 2 nucleotides of DNA out of the RuvA tetramer per ATP hydrolyzed, thus driving DNA branch migration. The RuvB motors rotate together with the DNA substrate, which together with the progressing nucleotide cycle form the mechanistic basis for DNA recombination by continuous HJ branch migration. Branch migration allows RuvC to scan DNA until it finds its consensus sequence, where it cleaves and resolves cruciform DNA. This Fervidobacterium nodosum (strain ATCC 35602 / DSM 5306 / Rt17-B1) protein is Holliday junction branch migration complex subunit RuvB.